We begin with the raw amino-acid sequence, 266 residues long: Calpain small subunit 1 (266 aa).

Met-1 carries the N-acetylmethionine modification. Ser-6 is subject to Phosphoserine. Residues Glu-94–Arg-128 enclose the EF-hand 1; atypical domain. Residues Ala-107, Asp-110, Glu-112, Glu-117, Asp-135, Asp-150, Asp-152, Thr-154, Lys-156, and Glu-161 each coordinate Ca(2+). EF-hand domains are found at residues Phe-137–Lys-170, Asn-167–His-202, Leu-203–Leu-231, and Val-232–Ser-266. Position 177 is an N6-acetyllysine (Lys-177). Residues Asp-180, Asp-182, Ser-184, Thr-186, Glu-191, and Asp-223 each contribute to the Ca(2+) site.

Homodimer or heterodimer of a large (catalytic) and a small (regulatory) subunit. In presence of calcium, the heterodimer dissociates.

It localises to the cytoplasm. It is found in the cell membrane. Functionally, regulatory subunit of the calcium-regulated non-lysosomal thiol-protease which catalyzes limited proteolysis of substrates involved in cytoskeletal remodeling and signal transduction. Essential for embryonic development. The chain is Calpain small subunit 1 (CAPNS1) from Sus scrofa (Pig).